The following is a 941-amino-acid chain: Pre-mRNA-processing factor 6 (941 aa).

The disordered stretch occupies residues 1–79 (MNKKKKPFLG…DEDLNDTNYD (79 aa)). Residues 39–65 (DANDPVDDRHAPPGKRTVGDQMKKNQA) show a composition bias toward basic and acidic residues. A compositionally biased stretch (acidic residues) spans 66 to 78 (ADDDDEDLNDTNY). A Phosphoserine modification is found at serine 143. Residues threonine 180, threonine 266, and threonine 275 each carry the phosphothreonine modification. Serine 279 carries the phosphoserine modification. HAT repeat units lie at residues 384-416 (TDIRAKKRVLRKALEHVPNSVRLWKAAVELEEP), 418-444 (DARIMLSRAVECCPTSVELWLALARLE), 445-476 (TYENARKVLNKARENIPTDRHIWITAAKLEEA), 554-586 (NALECARAIYAYALQVFPSKKSVWLRAAYFEKN), 588-620 (GTRESLEALLQRAVAHCPKAEVLWLMGAKSKWL), 622-654 (GDVPAARSILALAFQANPNSEEIWLAAVKLESE), 689-721 (DNIRAAQDLCEEALRHYEDFPKLWMMKGQIEEQ), 723-755 (EMMEKAREAYNQGLKKCPHSTPLWLLLSRLEEK), and 855-887 (RKITKAREWFHRTVKIDSDLGDAWAFFYKFELQ).

As to quaternary structure, identified in the spliceosome B complex. Identified in the spliceosome C complex. Associates with the U5 snRNP particle. Component of the U4/U6-U5 tri-snRNP complex composed of the U4, U6 and U5 snRNAs and at least PRPF3, PRPF4, PRPF6, PRPF8, PRPF31, SNRNP200, TXNL4A, SNRNP40, DDX23, CD2BP2, PPIH, SNU13, EFTUD2, SART1 and USP39, LSm proteins LSm2-8 and Sm proteins. Interacts with ARAF. Interacts with AR and NR3C1, but not ESR1, independently of the presence of hormones. Interacts with USH1G. Phosphorylated by PRP4K during spliceosome assembly. As to expression, widely expressed.

Its subcellular location is the nucleus. It is found in the nucleoplasm. It localises to the nucleus speckle. Its function is as follows. Involved in pre-mRNA splicing as component of the U4/U6-U5 tri-snRNP complex, one of the building blocks of the spliceosome. Enhances dihydrotestosterone-induced transactivation activity of AR, as well as dexamethasone-induced transactivation activity of NR3C1, but does not affect estrogen-induced transactivation. This is Pre-mRNA-processing factor 6 from Homo sapiens (Human).